The following is a 264-amino-acid chain: Thymidylate synthase (264 aa).

Arginine 21 serves as a coordination point for dUMP. Histidine 51 provides a ligand contact to (6R)-5,10-methylene-5,6,7,8-tetrahydrofolate. 126–127 (RR) serves as a coordination point for dUMP. The active-site Nucleophile is the cysteine 146. Residues 166-169 (RSAD), asparagine 177, and 207-209 (HLY) each bind dUMP. Aspartate 169 contacts (6R)-5,10-methylene-5,6,7,8-tetrahydrofolate. Alanine 263 is a binding site for (6R)-5,10-methylene-5,6,7,8-tetrahydrofolate.

Belongs to the thymidylate synthase family. Bacterial-type ThyA subfamily. In terms of assembly, homodimer.

Its subcellular location is the cytoplasm. It carries out the reaction dUMP + (6R)-5,10-methylene-5,6,7,8-tetrahydrofolate = 7,8-dihydrofolate + dTMP. It functions in the pathway pyrimidine metabolism; dTTP biosynthesis. In terms of biological role, catalyzes the reductive methylation of 2'-deoxyuridine-5'-monophosphate (dUMP) to 2'-deoxythymidine-5'-monophosphate (dTMP) while utilizing 5,10-methylenetetrahydrofolate (mTHF) as the methyl donor and reductant in the reaction, yielding dihydrofolate (DHF) as a by-product. This enzymatic reaction provides an intracellular de novo source of dTMP, an essential precursor for DNA biosynthesis. The chain is Thymidylate synthase from Rhizobium etli (strain ATCC 51251 / DSM 11541 / JCM 21823 / NBRC 15573 / CFN 42).